Here is a 172-residue protein sequence, read N- to C-terminus: Small ribosomal subunit protein uS5 (172 aa).

The region spanning 17-80 (MREKMIAVNR…EEARRKMIKV (64 aa)) is the S5 DRBM domain.

The protein belongs to the universal ribosomal protein uS5 family. As to quaternary structure, part of the 30S ribosomal subunit. Contacts proteins S4 and S8.

Its function is as follows. With S4 and S12 plays an important role in translational accuracy. Located at the back of the 30S subunit body where it stabilizes the conformation of the head with respect to the body. This Herminiimonas arsenicoxydans protein is Small ribosomal subunit protein uS5.